Consider the following 2729-residue polypeptide: Protein NO VEIN (2729 aa).

The disordered stretch occupies residues 1–27 (MQGNHDGSWSLHPSTNNGSGRANGNIN). 2 consecutive short sequence motifs (nuclear localization signal) follow at residues 194–201 (KRKVDVLR) and 473–480 (MKRLGGSN). Disordered stretches follow at residues 477–517 (GGSN…IPKL) and 2482–2515 (LPSS…DVTE). 2 stretches are compositionally biased toward basic and acidic residues: residues 488–497 (RNHEKSDSSK) and 2496–2515 (NTDD…DVTE).

In terms of tissue distribution, specifically expressed in developing embryos, leaf primordia, and shoot and root apical meristems.

Its subcellular location is the nucleus. Its function is as follows. Essential protein required for cell fate determination during embryogenesis. Mediates auxin-dependent coordinated cell-fate specification and patterning in embryos (e.g. cotyledon outgrowth and separation), shoots and roots (e.g. leaf vascular development, cellular patterning and stem cell maintenance in the meristems). Required for provascular PIN1 expression and region-specific expression of PIN7 in leaf primordia, cell type-specific expression of PIN3, PIN4, and PIN7 in the root, and PIN2 polarity in the root cortex. This Arabidopsis thaliana (Mouse-ear cress) protein is Protein NO VEIN.